Consider the following 328-residue polypeptide: Malate dehydrogenase (328 aa).

Position 12-18 (12-18) interacts with NAD(+); sequence GAAGQIG. Residues Arg-95 and Arg-101 each coordinate substrate. NAD(+)-binding positions include Asn-108, Gln-115, and 132-134; that span reads VGN. Asn-134 and Arg-165 together coordinate substrate. His-190 (proton acceptor) is an active-site residue.

Belongs to the LDH/MDH superfamily. MDH type 2 family.

It carries out the reaction (S)-malate + NAD(+) = oxaloacetate + NADH + H(+). Its function is as follows. Catalyzes the reversible oxidation of malate to oxaloacetate. In Polaromonas naphthalenivorans (strain CJ2), this protein is Malate dehydrogenase.